The sequence spans 289 residues: D-alanine aminotransferase (289 aa).

Tyr31 is a binding site for substrate. A pyridoxal 5'-phosphate-binding site is contributed by Arg50. The substrate site is built by Arg99 and His101. At Lys147 the chain carries N6-(pyridoxal phosphate)lysine. Pyridoxal 5'-phosphate is bound at residue Glu179.

The protein belongs to the class-IV pyridoxal-phosphate-dependent aminotransferase family. As to quaternary structure, homodimer. Pyridoxal 5'-phosphate serves as cofactor.

It carries out the reaction D-alanine + 2-oxoglutarate = D-glutamate + pyruvate. In terms of biological role, acts on the D-isomers of alanine, leucine, aspartate, glutamate, aminobutyrate, norvaline and asparagine. The enzyme transfers an amino group from a substrate D-amino acid to the pyridoxal phosphate cofactor to form pyridoxamine and an alpha-keto acid in the first half-reaction. The second half-reaction is the reverse of the first, transferring the amino group from the pyridoxamine to a second alpha-keto acid to form the product D-amino acid via a ping-pong mechanism. This is an important process in the formation of D-alanine and D-glutamate, which are essential bacterial cell wall components. This is D-alanine aminotransferase (dat) from Listeria monocytogenes serotype 1/2a (strain 10403S).